Here is a 440-residue protein sequence, read N- to C-terminus: tRNA-2-methylthio-N(6)-dimethylallyladenosine synthase (440 aa).

One can recognise an MTTase N-terminal domain in the interval 3–119 (KKFFIKTFGC…LPELINQAQA (117 aa)). Residues Cys12, Cys48, Cys82, Cys158, Cys162, and Cys165 each contribute to the [4Fe-4S] cluster site. In terms of domain architecture, Radical SAM core spans 144–374 (RDNKYCAYVT…LELQKSILSE (231 aa)). Residues 377–437 (KKYEGTVQEV…PFSLEGELLE (61 aa)) enclose the TRAM domain.

Belongs to the methylthiotransferase family. MiaB subfamily. In terms of assembly, monomer. Requires [4Fe-4S] cluster as cofactor.

The protein resides in the cytoplasm. It carries out the reaction N(6)-dimethylallyladenosine(37) in tRNA + (sulfur carrier)-SH + AH2 + 2 S-adenosyl-L-methionine = 2-methylsulfanyl-N(6)-dimethylallyladenosine(37) in tRNA + (sulfur carrier)-H + 5'-deoxyadenosine + L-methionine + A + S-adenosyl-L-homocysteine + 2 H(+). In terms of biological role, catalyzes the methylthiolation of N6-(dimethylallyl)adenosine (i(6)A), leading to the formation of 2-methylthio-N6-(dimethylallyl)adenosine (ms(2)i(6)A) at position 37 in tRNAs that read codons beginning with uridine. The polypeptide is tRNA-2-methylthio-N(6)-dimethylallyladenosine synthase (Aquifex aeolicus (strain VF5)).